A 310-amino-acid polypeptide reads, in one-letter code: Putative S-adenosyl-L-methionine-dependent methyltransferase MMAR_0356 (310 aa).

S-adenosyl-L-methionine-binding positions include aspartate 137 and 166-167; that span reads DL.

It belongs to the UPF0677 family.

Exhibits S-adenosyl-L-methionine-dependent methyltransferase activity. This Mycobacterium marinum (strain ATCC BAA-535 / M) protein is Putative S-adenosyl-L-methionine-dependent methyltransferase MMAR_0356.